The following is a 404-amino-acid chain: Cysteine desulfurase IscS (404 aa).

Pyridoxal 5'-phosphate-binding positions include 75–76 (AT), Asn155, Gln183, and 203–205 (SAH). Lys206 is subject to N6-(pyridoxal phosphate)lysine. Thr243 serves as a coordination point for pyridoxal 5'-phosphate. Residue Cys328 is the Cysteine persulfide intermediate of the active site. Cys328 provides a ligand contact to [2Fe-2S] cluster.

It belongs to the class-V pyridoxal-phosphate-dependent aminotransferase family. NifS/IscS subfamily. As to quaternary structure, homodimer. Forms a heterotetramer with IscU, interacts with other sulfur acceptors. Requires pyridoxal 5'-phosphate as cofactor.

The protein localises to the cytoplasm. The catalysed reaction is (sulfur carrier)-H + L-cysteine = (sulfur carrier)-SH + L-alanine. The protein operates within cofactor biosynthesis; iron-sulfur cluster biosynthesis. In terms of biological role, master enzyme that delivers sulfur to a number of partners involved in Fe-S cluster assembly, tRNA modification or cofactor biosynthesis. Catalyzes the removal of elemental sulfur atoms from cysteine to produce alanine. Functions as a sulfur delivery protein for Fe-S cluster synthesis onto IscU, an Fe-S scaffold assembly protein, as well as other S acceptor proteins. The chain is Cysteine desulfurase IscS from Azotobacter vinelandii (strain DJ / ATCC BAA-1303).